The primary structure comprises 419 residues: UDP-N-acetylglucosamine 1-carboxyvinyltransferase (419 aa).

22 to 23 (KN) serves as a coordination point for phosphoenolpyruvate. Residue arginine 95 participates in UDP-N-acetyl-alpha-D-glucosamine binding. The Proton donor role is filled by cysteine 119. Cysteine 119 carries the 2-(S-cysteinyl)pyruvic acid O-phosphothioketal modification. Residues 164 to 167 (KVSV), aspartate 308, and isoleucine 330 each bind UDP-N-acetyl-alpha-D-glucosamine.

The protein belongs to the EPSP synthase family. MurA subfamily.

The protein localises to the cytoplasm. The catalysed reaction is phosphoenolpyruvate + UDP-N-acetyl-alpha-D-glucosamine = UDP-N-acetyl-3-O-(1-carboxyvinyl)-alpha-D-glucosamine + phosphate. The protein operates within cell wall biogenesis; peptidoglycan biosynthesis. Its function is as follows. Cell wall formation. Adds enolpyruvyl to UDP-N-acetylglucosamine. This chain is UDP-N-acetylglucosamine 1-carboxyvinyltransferase, found in Rickettsia akari (strain Hartford).